The primary structure comprises 311 residues: MLRNQIDKIRLLFRKDRESYLCFYRILGFYPHNIQIYEQALLHKSSAVRSEKGRPLNNERLEFLGDAILDAIVGDIVYKRFEGKREGFLTNTRSKIVQRETLNKLAVEIGLDKLIKYSTRSSSHNSYMYGNAFEAFIGAIYLDQGYERCKQFMEQRIINRYIDLDKISRKEVNFKSKLIEWSQKNKMEVSFELIEQFLDHDSNPVFQTEVRIEGLPAGTGTGYSKKESQQNAAQMAIKKVKDQTFMDTVNEAKSQHSKPSEVETESVEPELTESETMEPDTLETEAPEAETTADKVETTVNEVEATETEKE.

The 126-residue stretch at Tyr20 to Gly145 folds into the RNase III domain. Glu62 is a Mg(2+) binding site. Residue Asp66 is part of the active site. The Mg(2+) site is built by Asn131 and Glu134. Residue Glu134 is part of the active site. In terms of domain architecture, DRBM spans Asn173–Asp242. Residues Asn250–Glu311 form a disordered region. Residues Val262 to Glu288 show a composition bias toward acidic residues.

The protein belongs to the ribonuclease III family. Homodimer. It depends on Mg(2+) as a cofactor.

The protein resides in the cytoplasm. The enzyme catalyses Endonucleolytic cleavage to 5'-phosphomonoester.. Digests double-stranded RNA. Involved in the processing of primary rRNA transcript to yield the immediate precursors to the large and small rRNAs (23S and 16S). Processes some mRNAs, and tRNAs when they are encoded in the rRNA operon. Processes pre-crRNA and tracrRNA of type II CRISPR loci if present in the organism. In Bacteroides thetaiotaomicron (strain ATCC 29148 / DSM 2079 / JCM 5827 / CCUG 10774 / NCTC 10582 / VPI-5482 / E50), this protein is Ribonuclease 3.